A 1866-amino-acid polypeptide reads, in one-letter code: Protein strawberry notch homolog (1866 aa).

Residues 19–28 show a composition bias toward low complexity; it reads QQSSPTPSTS. 5 disordered regions span residues 19–63, 132–151, 156–253, 561–581, and 1112–1308; these read QQSS…HSSS, TAPT…IVPK, LFET…GLPI, GMAS…QKAK, and GLSG…ARGS. Composition is skewed to polar residues over residues 37–63 and 134–146; these read QSFS…HSSS and PTVN…TPTV. Residues 161–176 show a composition bias toward low complexity; sequence TADSPTPSGDTSTTAS. Polar residues-rich tracts occupy residues 191–203 and 210–228; these read DRQN…TARS and TPST…LTQR. A compositionally biased stretch (low complexity) spans 229 to 239; it reads SHTSSPASSAS. A compositionally biased stretch (polar residues) spans 566–577; sequence RLQTTPQPLTKS. Over residues 1112 to 1126 the composition is skewed to low complexity; sequence GLSGIGRSSMSSSTG. Residues 1142 to 1152 show a composition bias toward acidic residues; the sequence is DGSDDEVENDM. Positions 1164–1177 are enriched in basic and acidic residues; the sequence is ESAREEAEGARTLE. The segment covering 1194 to 1213 has biased composition (acidic residues); sequence SSSDDSDEEVVKDEDEDEEA. Basic and acidic residues-rich tracts occupy residues 1262–1281 and 1290–1304; these read RDEE…EERR and RRAE…EELQ.

Belongs to the SBNO family. In terms of tissue distribution, expressed in the somatic gonad, neurons, hypodermal cells, seam cells, the excretory system, and intestinal cells (at protein level).

It localises to the nucleus. Its function is as follows. Transcriptional activator that functions upstream of the let-60/Ras and let-23/EGFR signaling pathways to positively regulate lin-3 expression and thereby promote vulval induction. Plays a role in excretory duct development. Plays a role in male tail development. The polypeptide is Protein strawberry notch homolog (Caenorhabditis elegans).